We begin with the raw amino-acid sequence, 321 residues long: MRKTVLYLSAASLFLSSYTLKNDKEYSLAEEHIKNLPEAPEGYKWVVNEDYTDEFNGKRLNAAKWHAKSPYWTNGRPPATFKAENVSVKKGCLRIINTVLSPTEGLDGKPGDKYRLAGGAVASVKNQAHYGYYETRMKASLTTMSSTFWLSNRPVMKEIMKGGKKIKTWSSQELDIIETMGIIRSVNPDNPWNKTWNMQMNSNTHYWYQEQGGKRTDNTAKRSDVVSYMTDPSAEDFHTYGCWWVDANTVKFYYDGKYMYTIKPTTKYTDTPFDRPMFIHIVTETYDWEKQVPTAEDLKDKDKSTTYYDWVRAYKLVPIEE.

The signal sequence occupies residues 1 to 20 (MRKTVLYLSAASLFLSSYTL). In terms of domain architecture, GH16 spans 31-319 (EHIKNLPEAP…WVRAYKLVPI (289 aa)). Substrate contacts are provided by Trp-72, Arg-76, Glu-173, Glu-178, and Glu-284. The active-site Nucleophile is the Glu-173. Residue Glu-178 is the Proton donor of the active site.

Belongs to the glycosyl hydrolase 16 family.

It catalyses the reaction Hydrolysis of beta-D-galactopyranose-(1-&gt;4)-alpha-L-galactopyranose-6-sulfate linkages in porphyran.. Cleaves the sulfated polysaccharide porphyran at the (1-&gt;4) linkages between beta-D-galactopyranose and alpha-L-galactopyranose-6-sulfate, forming mostly the disaccharide alpha-L-galactopyranose-6-sulfate-(1-&gt;3)-beta-D-galactose. Some longer oligosaccharides of even number of residues are also observed. Inactive on the non-sulfated agarose portion of the porphyran backbone. This Phocaeicola plebeius (strain DSM 17135 / JCM 12973 / CCUG 54634 / M2) (Bacteroides plebeius) protein is Beta-porphyranase B.